The chain runs to 79 residues: RNA-binding protein Hfq (79 aa).

Positions 10–70 (DVFLNTVRKQ…ISTIMPGQPV (61 aa)) constitute a Sm domain.

It belongs to the Hfq family. As to quaternary structure, homohexamer.

Its function is as follows. RNA chaperone that binds small regulatory RNA (sRNAs) and mRNAs to facilitate mRNA translational regulation in response to envelope stress, environmental stress and changes in metabolite concentrations. Also binds with high specificity to tRNAs. This chain is RNA-binding protein Hfq, found in Bartonella henselae (strain ATCC 49882 / DSM 28221 / CCUG 30454 / Houston 1) (Rochalimaea henselae).